A 463-amino-acid polypeptide reads, in one-letter code: ATP synthase subunit beta (463 aa).

152–159 (GGAGVGKT) is a binding site for ATP.

Belongs to the ATPase alpha/beta chains family. F-type ATPases have 2 components, CF(1) - the catalytic core - and CF(0) - the membrane proton channel. CF(1) has five subunits: alpha(3), beta(3), gamma(1), delta(1), epsilon(1). CF(0) has three main subunits: a(1), b(2) and c(9-12). The alpha and beta chains form an alternating ring which encloses part of the gamma chain. CF(1) is attached to CF(0) by a central stalk formed by the gamma and epsilon chains, while a peripheral stalk is formed by the delta and b chains.

Its subcellular location is the cell inner membrane. The catalysed reaction is ATP + H2O + 4 H(+)(in) = ADP + phosphate + 5 H(+)(out). Functionally, produces ATP from ADP in the presence of a proton gradient across the membrane. The catalytic sites are hosted primarily by the beta subunits. This is ATP synthase subunit beta from Shewanella putrefaciens (strain CN-32 / ATCC BAA-453).